We begin with the raw amino-acid sequence, 331 residues long: 3-dehydroquinate synthase homolog (331 aa).

This sequence belongs to the archaeal-type DHQ synthase family.

This is 3-dehydroquinate synthase homolog from Persephonella marina (strain DSM 14350 / EX-H1).